A 484-amino-acid chain; its full sequence is Arginyl-tRNA--protein transferase 1 (484 aa).

It belongs to the R-transferase family.

The catalysed reaction is an N-terminal L-alpha-aminoacyl-[protein] + L-arginyl-tRNA(Arg) = an N-terminal L-arginyl-L-aminoacyl-[protein] + tRNA(Arg) + H(+). Involved in the post-translational conjugation of arginine to the N-terminal aspartate or glutamate of a protein. This arginylation is required for degradation of the protein via the ubiquitin pathway. Does not arginylate cysteine residues. The polypeptide is Arginyl-tRNA--protein transferase 1 (Ate1) (Drosophila melanogaster (Fruit fly)).